The chain runs to 222 residues: Sperm acrosome-associated protein 9 (222 aa).

The tract at residues 164 to 222 is disordered; it reads QHVSEPQAHQESTRGAARPAQAIGTQPRATKHKCRQLTKASLKPRGCSKPPWRPPGGKL.

As to quaternary structure, microtubule inner protein component of sperm flagellar doublet microtubules. Interacts with CABP1 and CALR. Interacts with INCA1. Interacts with microtubules.

The protein resides in the cytoplasm. It is found in the cytoplasmic vesicle. Its subcellular location is the secretory vesicle. The protein localises to the acrosome. It localises to the cytoskeleton. The protein resides in the cilium basal body. It is found in the flagellum axoneme. Its subcellular location is the cilium axoneme. The protein localises to the nucleus. Functionally, microtubule inner protein (MIP) part of the dynein-decorated doublet microtubules (DMTs) of multiciliated respiratory cells and the distal singlet microtubules of monoflagellated spermatozoa. Forms an extensive interaction network cross-linking the lumen of axonemal doublet microtubules. This is Sperm acrosome-associated protein 9 from Homo sapiens (Human).